The following is a 152-amino-acid chain: Probable ribose-5-phosphate isomerase B (152 aa).

A D-ribulose 5-phosphate-binding site is contributed by 10–11; it reads DH. The Proton acceptor role is filled by C69. D-ribulose 5-phosphate is bound at residue 70-74; it reads GTGVG. The Proton donor role is filled by H102. Residues D103, R113, R136, and R140 each coordinate D-ribulose 5-phosphate.

This sequence belongs to the LacAB/RpiB family. As to quaternary structure, homodimer.

It catalyses the reaction aldehydo-D-ribose 5-phosphate = D-ribulose 5-phosphate. It functions in the pathway carbohydrate degradation; pentose phosphate pathway; D-ribose 5-phosphate from D-ribulose 5-phosphate (non-oxidative stage): step 1/1. Its function is as follows. Catalyzes the interconversion of ribulose-5-P and ribose-5-P. In Mycoplasma genitalium (strain ATCC 33530 / DSM 19775 / NCTC 10195 / G37) (Mycoplasmoides genitalium), this protein is Probable ribose-5-phosphate isomerase B.